The following is a 115-amino-acid chain: Nucleoid-associated protein PMN2A_1347 (115 aa).

The interval Ser89 to Asn115 is disordered.

The protein belongs to the YbaB/EbfC family. Homodimer.

The protein localises to the cytoplasm. It is found in the nucleoid. Binds to DNA and alters its conformation. May be involved in regulation of gene expression, nucleoid organization and DNA protection. In Prochlorococcus marinus (strain NATL2A), this protein is Nucleoid-associated protein PMN2A_1347.